Here is a 231-residue protein sequence, read N- to C-terminus: Small proline-rich protein 3 (231 aa).

The disordered stretch occupies residues M1–P104. At S2 the chain carries N-acetylserine. Tandem repeats lie at residues E55–P62, E63–P70, D71–P78, D79–P86, E87–P94, G95–P102, Q103–P110, D111–P118, E119–P126, G127–P134, Q135–P142, E143–P150, G151–P158, Q159–P166, E167–P174, G175–P182, Q183–P190, E191–P198, G199–P206, Q207–Q214, and E215–T222. The interval E55–T222 is 21 X 8 AA approximate tandem repeats. Over residues S80–P94 the composition is skewed to polar residues. The tract at residues K188–K231 is disordered. Residues Q214–K231 are compositionally biased toward polar residues.

The protein belongs to the cornifin (SPRR) family. In terms of tissue distribution, suprabasal layers of the squamous epithelia of esophagus, tongue and oral mucosa.

It is found in the cytoplasm. In terms of biological role, can serve as a substrate in transglutaminase-catalyzed cross linking reactions and can function as a cross-linked envelope precursor. In Oryctolagus cuniculus (Rabbit), this protein is Small proline-rich protein 3 (SPRR3).